A 121-amino-acid chain; its full sequence is Dihydroneopterin aldolase (121 aa).

Substrate contacts are provided by residues E22, Y54, and L73–E74. The Proton donor/acceptor role is filled by K100.

The protein belongs to the DHNA family. In terms of assembly, homooctamer. Four molecules assemble into a ring, and two rings come together to give a cylinder with a hole of at least 13 a diameter.

The enzyme catalyses 7,8-dihydroneopterin = 6-hydroxymethyl-7,8-dihydropterin + glycolaldehyde. It catalyses the reaction 7,8-dihydroneopterin = 7,8-dihydromonapterin. Its pathway is cofactor biosynthesis; tetrahydrofolate biosynthesis; 2-amino-4-hydroxy-6-hydroxymethyl-7,8-dihydropteridine diphosphate from 7,8-dihydroneopterin triphosphate: step 3/4. Catalyzes the conversion of 7,8-dihydroneopterin to 6-hydroxymethyl-7,8-dihydropterin. Can also catalyze the epimerization of carbon 2' of dihydroneopterin to dihydromonapterin. The sequence is that of Dihydroneopterin aldolase (folB) from Staphylococcus aureus (strain COL).